The primary structure comprises 489 residues: FAD-linked oxidoreductase tazG (489 aa).

Residues 1 to 17 form the signal peptide; sequence MVAFSAILQTALGLSAA. Residue asparagine 38 is glycosylated (N-linked (GlcNAc...) asparagine). The FAD-binding PCMH-type domain occupies 55–224; it reads APSYGAGAIK…TSATYRLPEV (170 aa). N-linked (GlcNAc...) asparagine glycosylation is found at asparagine 242 and asparagine 306.

Belongs to the oxygen-dependent FAD-linked oxidoreductase family. Requires FAD as cofactor.

It functions in the pathway secondary metabolite biosynthesis. In terms of biological role, FAD-linked oxidoreductase; part of the gene cluster that mediates the biosynthesis of azaterrilone A and other azaphilones, a class of fungal metabolites characterized by a highly oxygenated pyrano-quinone bicyclic core and exhibiting a broad range of bioactivities. The first step of the pathway begins with the non-reducing polyketide synthase tazA that assembles one acetyl-CoA starter unit, five malonyl-CoA units, and catalyzes a series of Claisen condensations, methylation, PT-mediated cyclization, and finally releases the first hexaketide precursor through the R-domain. The tazA product then undergoes reduction on its terminal ketone and the following pyran-ring formation by yet undetermined enzyme(s). Dehydration and enoyl reduction, possibly involving the trans-enoyl reductase tazE leads to the next intermediate. TazD is predicted as an acetyltransferase and might catalyze the acetylation steps leading to the synthesis of azaterrilone A. Azaterrilone A is not the final product of the taz pathway and both the highly reducing polyketide synthase tazB and the dual enzyme tazHJ catalyze late steps of the pathway, leading to the production of the 2 final stereoisomers that contain additional polyketide modification whose structures have still to be determined. The polypeptide is FAD-linked oxidoreductase tazG (Aspergillus terreus (strain NIH 2624 / FGSC A1156)).